Reading from the N-terminus, the 360-residue chain is Peptide chain release factor 1 (360 aa).

Q235 bears the N5-methylglutamine mark. The span at A284 to T293 shows a compositional bias: basic and acidic residues. The interval A284–Q314 is disordered.

It belongs to the prokaryotic/mitochondrial release factor family. In terms of processing, methylated by PrmC. Methylation increases the termination efficiency of RF1.

The protein localises to the cytoplasm. Its function is as follows. Peptide chain release factor 1 directs the termination of translation in response to the peptide chain termination codons UAG and UAA. In Erwinia tasmaniensis (strain DSM 17950 / CFBP 7177 / CIP 109463 / NCPPB 4357 / Et1/99), this protein is Peptide chain release factor 1.